A 465-amino-acid chain; its full sequence is uncharacterized protein (465 aa).

The next 11 membrane-spanning stretches (helical) occupy residues 19 to 39, 50 to 70, 91 to 111, 140 to 160, 164 to 184, 201 to 221, 244 to 264, 288 to 308, 342 to 362, 363 to 383, and 403 to 423; these read VLGP…GEYM, MIAG…VAMI, IVGP…YTML, FIVL…LATL, LVIT…VQFG, PYGW…YLGI, AGIM…SGLM, LMVL…NGCI, IVFL…DQVV, TFSI…MVMF, and LPTV…FLGY.

It belongs to the amino acid-polyamine-organocation (APC) superfamily.

It localises to the cell membrane. Probable amino-acid or metabolite transport protein. This is an uncharacterized protein from Rhizobium meliloti (strain 1021) (Ensifer meliloti).